A 501-amino-acid polypeptide reads, in one-letter code: Pyruvate kinase (501 aa).

A substrate-binding site is contributed by Arg-50. The K(+) site is built by Asn-52, Ser-54, Asp-85, and Thr-86. ATP is bound at residue 52-55 (NFSH). ATP contacts are provided by Arg-92 and Lys-178. Position 243 (Glu-243) interacts with Mg(2+). Substrate is bound by residues Gly-266, Asp-267, and Thr-299. Asp-267 contributes to the Mg(2+) binding site.

The protein belongs to the pyruvate kinase family. Homotetramer. Requires Mg(2+) as cofactor. The cofactor is K(+).

The catalysed reaction is pyruvate + ATP = phosphoenolpyruvate + ADP + H(+). It functions in the pathway carbohydrate degradation; glycolysis; pyruvate from D-glyceraldehyde 3-phosphate: step 5/5. This Lachancea kluyveri (strain ATCC 58438 / CBS 3082 / BCRC 21498 / NBRC 1685 / JCM 7257 / NCYC 543 / NRRL Y-12651) (Yeast) protein is Pyruvate kinase (PYK1).